The following is a 511-amino-acid chain: GMP synthase [glutamine-hydrolyzing] (511 aa).

A Glutamine amidotransferase type-1 domain is found at 5–195 (IVIVLDFGGQ…LFNICGCKGD (191 aa)). The active-site Nucleophile is cysteine 82. Residues histidine 169 and glutamate 171 contribute to the active site. The GMPS ATP-PPase domain maps to 196–386 (WKTSSFIEER…LGIPEKIVKR (191 aa)). Position 223–229 (223–229 (SGGVDSS)) interacts with ATP.

As to quaternary structure, homodimer.

It carries out the reaction XMP + L-glutamine + ATP + H2O = GMP + L-glutamate + AMP + diphosphate + 2 H(+). Its pathway is purine metabolism; GMP biosynthesis; GMP from XMP (L-Gln route): step 1/1. Its function is as follows. Catalyzes the synthesis of GMP from XMP. This is GMP synthase [glutamine-hydrolyzing] from Caldicellulosiruptor saccharolyticus (strain ATCC 43494 / DSM 8903 / Tp8T 6331).